The sequence spans 79 residues: Large ribosomal subunit protein uL24 (79 aa).

It belongs to the universal ribosomal protein uL24 family. Part of the 50S ribosomal subunit.

Its function is as follows. One of two assembly initiator proteins, it binds directly to the 5'-end of the 23S rRNA, where it nucleates assembly of the 50S subunit. One of the proteins that surrounds the polypeptide exit tunnel on the outside of the subunit. This is Large ribosomal subunit protein uL24 from Aliarcobacter butzleri (strain RM4018) (Arcobacter butzleri).